A 361-amino-acid chain; its full sequence is Aromatic amino acid aminotransferase (361 aa).

K221 bears the N6-(pyridoxal phosphate)lysine mark.

It belongs to the class-II pyridoxal-phosphate-dependent aminotransferase family. In terms of assembly, homodimer. It depends on pyridoxal 5'-phosphate as a cofactor.

The enzyme catalyses an aromatic L-alpha-amino acid + 2-oxoglutarate = an aromatic oxo-acid + L-glutamate. Functionally, aminotransferase that catalyzes the conversion of aromatic amino acids and 2-oxoglutarate into corresponding aromatic oxo acids and L-glutamate. The protein is Aromatic amino acid aminotransferase of Mycobacterium marinum (strain ATCC BAA-535 / M).